The sequence spans 39 residues: Photosystem II reaction center protein J (39 aa).

A helical membrane pass occupies residues 9-29 (LWLVVTFGGIVVLTVLGIFIY).

It belongs to the PsbJ family. In terms of assembly, PSII is composed of 1 copy each of membrane proteins PsbA, PsbB, PsbC, PsbD, PsbE, PsbF, PsbH, PsbI, PsbJ, PsbK, PsbL, PsbM, PsbT, PsbY, PsbZ, Psb30/Ycf12, at least 3 peripheral proteins of the oxygen-evolving complex and a large number of cofactors. It forms dimeric complexes.

The protein localises to the plastid. It is found in the chloroplast thylakoid membrane. One of the components of the core complex of photosystem II (PSII). PSII is a light-driven water:plastoquinone oxidoreductase that uses light energy to abstract electrons from H(2)O, generating O(2) and a proton gradient subsequently used for ATP formation. It consists of a core antenna complex that captures photons, and an electron transfer chain that converts photonic excitation into a charge separation. The protein is Photosystem II reaction center protein J of Cyanidium caldarium (Red alga).